The primary structure comprises 283 residues: MANLKALFLRMKSVKSIQKTTKVMQMISAAKLRQVQQRLNNARMHMLELSKIIDTNVVTKNNECTGPHNKKDILLVIMSSDRGLCGNFNNMIVKFAKSYIEELESCGKNVKLLFFGKVAYNMMCSQYSSKILDVFSNIQSITDFLSFKLFLYGSGVDFNQFIGVMVLFNKFYTTILQKPTVEQLMPCNIDISVSLKEYYKYEPAYLNVLSTMSLSYILNLMYIAFLENCASEHSSRVIAMESANNNTKEMLSKLVLQYNRSRQAAITTDLIEVISGFESLGNQ.

It belongs to the ATPase gamma chain family. As to quaternary structure, F-type ATPases have 2 components, CF(1) - the catalytic core - and CF(0) - the membrane proton channel. CF(1) has five subunits: alpha(3), beta(3), gamma(1), delta(1), epsilon(1). CF(0) has three main subunits: a, b and c.

The protein resides in the cell inner membrane. In terms of biological role, produces ATP from ADP in the presence of a proton gradient across the membrane. The gamma chain is believed to be important in regulating ATPase activity and the flow of protons through the CF(0) complex. This is ATP synthase gamma chain from Ehrlichia ruminantium (strain Welgevonden).